Consider the following 268-residue polypeptide: EFSEPSFITESYQTLHPISSEELLSLKYESDYPLGLLRDPLQPESLQGDYFTIKQEVVSPDNMCLGRISRGKLGGQESFESIESHDSCDRLTQSWSSQSSYNSLQRVPSYDSFDSEDYPPALPSHKSKGTFKDYVRDRAELNKDKPVIPAAALAGYTGSGPIQLWQFLLELLTDKSCQSFISWTGDGWEFKLSDPDEVARRWGKRKNKPKMNYEKLSRGLRYYYDKNIIHKTAGKRYVYRFVCDLQSLLGYVPEELHAMLDVKPDTDE.

Positions 131–139 (FKDYVRDRA) are helix HI-1. The interval 150–157 (AAALAGYT) is helix HI-2. The segment at residues 162–242 (IQLWQFLLEL…AGKRYVYRFV (81 aa)) is a DNA-binding region (ETS). The interval 245 to 249 (LQSLL) is helix H4. Positions 253-259 (PEELHAM) are helix H5.

It belongs to the ETS family. Binds DNA as a homodimer; homodimerization is required for transcription activation.

Its subcellular location is the nucleus. It is found in the cytoplasm. Autoinhibited by a module composed of four alpha helices (HI-1, HI-2, H4, and H5) that flank the DNA-binding ETS domain, reducing the affinity for DNA. Functionally, transcription factor. Directly controls the expression of cytokine and chemokine genes in a wide variety of different cellular contexts. This Xenopus laevis (African clawed frog) protein is Protein c-ets-1-B (ets1-b).